Reading from the N-terminus, the 498-residue chain is 2-(3-amino-3-carboxypropyl)histidine synthase subunit 2 (498 aa).

Positions 89, 110, and 341 each coordinate [4Fe-4S] cluster.

Belongs to the DPH1/DPH2 family. DPH2 subfamily. As to quaternary structure, component of the 2-(3-amino-3-carboxypropyl)histidine synthase complex composed of dph1, dph2, dph3 and a NADH-dependent reductase. It depends on [4Fe-4S] cluster as a cofactor.

The protein operates within protein modification; peptidyl-diphthamide biosynthesis. Functionally, required for the first step of diphthamide biosynthesis, a post-translational modification of histidine which occurs in elongation factor 2. Dph1 and dph2 transfer a 3-amino-3-carboxypropyl (ACP) group from S-adenosyl-L-methionine (SAM) to a histidine residue, the reaction is assisted by a reduction system comprising dph3 and a NADH-dependent reductase. Facilitates the reduction of the catalytic iron-sulfur cluster found in the dph1 subunit. The chain is 2-(3-amino-3-carboxypropyl)histidine synthase subunit 2 (dph2) from Danio rerio (Zebrafish).